A 276-amino-acid chain; its full sequence is Urease accessory protein UreD (276 aa).

The protein belongs to the UreD family. As to quaternary structure, ureD, UreF and UreG form a complex that acts as a GTP-hydrolysis-dependent molecular chaperone, activating the urease apoprotein by helping to assemble the nickel containing metallocenter of UreC. The UreE protein probably delivers the nickel.

Its subcellular location is the cytoplasm. Functionally, required for maturation of urease via the functional incorporation of the urease nickel metallocenter. This Verminephrobacter eiseniae (strain EF01-2) protein is Urease accessory protein UreD.